The chain runs to 36 residues: uncharacterized protein (36 aa).

It is found in the mitochondrion. This is an uncharacterized protein from Saccharomyces cerevisiae (strain ATCC 204508 / S288c) (Baker's yeast).